A 315-amino-acid chain; its full sequence is tRNA wybutosine-synthesizing protein 5 (315 aa).

The JmjC domain occupies 102–267 (DEKYYLRSLG…YDTTDTYGNK (166 aa)). Residue tyrosine 106 coordinates 2-oxoglutarate. Fe cation-binding residues include histidine 160 and aspartate 162. The 2-oxoglutarate site is built by asparagine 166 and lysine 175. Histidine 235 contacts Fe cation.

This sequence belongs to the TYW5 family. Homodimer. It depends on Fe(2+) as a cofactor.

The catalysed reaction is 7-[(3S)-3-amino-3-carboxypropyl]wyosine(37) in tRNA(Phe) + 2-oxoglutarate + O2 = 7-(2-hydroxy-3-amino-3-carboxypropyl)wyosine(37) in tRNA(Phe) + succinate + CO2. It functions in the pathway tRNA modification; wybutosine-tRNA(Phe) biosynthesis. In terms of biological role, tRNA hydroxylase that acts as a component of the wybutosine biosynthesis pathway. Wybutosine is a hyper modified guanosine with a tricyclic base found at the 3'-position adjacent to the anticodon of eukaryotic phenylalanine tRNA. Catalyzes the hydroxylation of 7-(a-amino-a-carboxypropyl)wyosine (yW-72) into undermodified hydroxywybutosine (OHyW*). OHyW* being further transformed into hydroxywybutosine (OHyW) by LCMT2/TYW4. OHyW is a derivative of wybutosine found in higher eukaryotes. This Mus musculus (Mouse) protein is tRNA wybutosine-synthesizing protein 5 (Tyw5).